An 812-amino-acid polypeptide reads, in one-letter code: INO80 complex subunit D (812 aa).

Disordered stretches follow at residues 521–573 (NSRK…LCMP) and 581–600 (EVSS…ELPD). Residues 524–558 (KVQHHQQRKPRKKTKPPALTKKTKKKRRRGPRRPQ) show a composition bias toward basic residues. Positions 585–595 (IRSPSTPNLST) are enriched in polar residues.

It belongs to the INO80D family. In terms of assembly, component of the chromatin-remodeling INO80 complex.

Its subcellular location is the nucleus. Putative regulatory component of the chromatin remodeling INO80 complex which is involved in transcriptional regulation, DNA replication and probably DNA repair. This Xenopus laevis (African clawed frog) protein is INO80 complex subunit D.